A 380-amino-acid polypeptide reads, in one-letter code: Cytoplasmic protein NCK2 (380 aa).

An N-acetylthreonine modification is found at Thr-2. One can recognise an SH3 1 domain in the interval 2–61 (TEEVIVIAKWDYTAQQDQELDIKKNERLWLLDDSKTWWRVRNAANRTGYVPSNYVERKNS). Residues 79–102 (KTRRKTSARDASPTPSTDAEYPAN) are disordered. Ser-90 is modified (phosphoserine). Thr-92 is modified (phosphothreonine). Phosphoserine is present on Ser-94. Tyr-110 is modified (phosphotyrosine). SH3 domains follow at residues 111-170 (DLNI…EEVD) and 195-257 (RVLH…VLSD). Residues 285-380 (WYYGNVTRHQ…EKLYLVRALQ (96 aa)) enclose the SH2 domain.

Interacts with DOCK1, LIMS1 and TGFB1I1. Part of a complex containing PPP1R15B, PP1 and NCK2. Interacts with FASLG. Interacts with AXL. Interacts with PAK1, PKN2 and SOS1. Interacts (via SH2 domain) with EGFR. Interacts (via SH2 domain) with DDR1. Interacts with IRS1. Phosphorylated. As to expression, ubiquitous.

The protein localises to the cytoplasm. It localises to the endoplasmic reticulum. In terms of biological role, adapter protein which associates with tyrosine-phosphorylated growth factor receptors or their cellular substrates. Maintains low levels of EIF2S1 phosphorylation by promoting its dephosphorylation by PP1. Plays a role in ELK1-dependent transcriptional activation in response to activated Ras signaling. The chain is Cytoplasmic protein NCK2 (NCK2) from Homo sapiens (Human).